The chain runs to 308 residues: 2-dehydro-3-deoxy-phosphogluconate/2-dehydro-3-deoxy-6-phosphogalactonate aldolase (308 aa).

Residues Thr-57–Thr-58, Tyr-144–Tyr-146, and Lys-169–Thr-171 each bind substrate. The Schiff-base intermediate with substrate role is filled by Lys-169.

Belongs to the DapA family. KDPG aldolase subfamily. In terms of assembly, homotetramer; dimer of dimers.

The enzyme catalyses 2-dehydro-3-deoxy-6-phospho-D-gluconate = D-glyceraldehyde 3-phosphate + pyruvate. The catalysed reaction is 2-dehydro-3-deoxy-6-phospho-D-galactonate = D-glyceraldehyde 3-phosphate + pyruvate. Its pathway is carbohydrate acid metabolism; 2-dehydro-3-deoxy-D-gluconate degradation; D-glyceraldehyde 3-phosphate and pyruvate from 2-dehydro-3-deoxy-D-gluconate: step 2/2. In terms of biological role, involved in the degradation of glucose and galactose via the Entner-Doudoroff pathway. Catalyzes the reversible cleavage of 2-keto-3-deoxy-6-phosphogluconate (KDPG) and 2-keto-3-deoxygluconate (KDG) forming pyruvate and glyceraldehyde 3-phosphate or glyceraldehyde, respectively. It is also able to catalyze the reversible cleavage of 2-keto-3-deoxy-6-phosphogalactonate (KDPGal) and 2-keto-3-deoxygalactonate (KDGal). The polypeptide is 2-dehydro-3-deoxy-phosphogluconate/2-dehydro-3-deoxy-6-phosphogalactonate aldolase (eda) (Saccharolobus solfataricus (strain ATCC 35092 / DSM 1617 / JCM 11322 / P2) (Sulfolobus solfataricus)).